Here is a 123-residue protein sequence, read N- to C-terminus: Large ribosomal subunit protein bL12 (123 aa).

The tract at residues 98 to 123 (KEGVSKEEAEEIKSKLEDAGATVELK) is disordered. Over residues 100–115 (GVSKEEAEEIKSKLED) the composition is skewed to basic and acidic residues.

It belongs to the bacterial ribosomal protein bL12 family. In terms of assembly, homodimer. Part of the ribosomal stalk of the 50S ribosomal subunit. Forms a multimeric L10(L12)X complex, where L10 forms an elongated spine to which 2 to 4 L12 dimers bind in a sequential fashion. Binds GTP-bound translation factors.

Functionally, forms part of the ribosomal stalk which helps the ribosome interact with GTP-bound translation factors. Is thus essential for accurate translation. The protein is Large ribosomal subunit protein bL12 of Halothermothrix orenii (strain H 168 / OCM 544 / DSM 9562).